Reading from the N-terminus, the 595-residue chain is UvrABC system protein C (595 aa).

Residues Ser-14–Ile-91 form the GIY-YIG domain. A UVR domain is found at Asp-196–Leu-231.

Belongs to the UvrC family. As to quaternary structure, interacts with UvrB in an incision complex.

It is found in the cytoplasm. Functionally, the UvrABC repair system catalyzes the recognition and processing of DNA lesions. UvrC both incises the 5' and 3' sides of the lesion. The N-terminal half is responsible for the 3' incision and the C-terminal half is responsible for the 5' incision. The sequence is that of UvrABC system protein C from Streptococcus thermophilus (strain CNRZ 1066).